The chain runs to 254 residues: Geranylgeranylglyceryl phosphate synthase (254 aa).

Residues Asp-27 and Ser-56 each contribute to the Mg(2+) site. Sn-glycerol 1-phosphate contacts are provided by residues 174–180, 212–213, and 234–235; these read YLEAGSG, GG, and GT.

The protein belongs to the GGGP/HepGP synthase family. Group II subfamily. In terms of assembly, homohexamer. Requires Mg(2+) as cofactor.

The protein resides in the cytoplasm. It catalyses the reaction sn-glycerol 1-phosphate + (2E,6E,10E)-geranylgeranyl diphosphate = sn-3-O-(geranylgeranyl)glycerol 1-phosphate + diphosphate. The protein operates within membrane lipid metabolism; glycerophospholipid metabolism. In terms of biological role, prenyltransferase that catalyzes the transfer of the geranylgeranyl moiety of geranylgeranyl diphosphate (GGPP) to the C3 hydroxyl of sn-glycerol-1-phosphate (G1P). This reaction is the first ether-bond-formation step in the biosynthesis of archaeal membrane lipids. This Aeropyrum pernix (strain ATCC 700893 / DSM 11879 / JCM 9820 / NBRC 100138 / K1) protein is Geranylgeranylglyceryl phosphate synthase.